A 505-amino-acid polypeptide reads, in one-letter code: Glutamate--tRNA ligase (505 aa).

The short motif at 11 to 21 (PSPTGPLHIGG) is the 'HIGH' region element. The 'KMSKS' region motif lies at 260-264 (KLSKR). Lys263 is a binding site for ATP.

It belongs to the class-I aminoacyl-tRNA synthetase family. Glutamate--tRNA ligase type 1 subfamily. As to quaternary structure, monomer.

It localises to the cytoplasm. It catalyses the reaction tRNA(Glu) + L-glutamate + ATP = L-glutamyl-tRNA(Glu) + AMP + diphosphate. Functionally, catalyzes the attachment of glutamate to tRNA(Glu) in a two-step reaction: glutamate is first activated by ATP to form Glu-AMP and then transferred to the acceptor end of tRNA(Glu). In Christiangramia forsetii (strain DSM 17595 / CGMCC 1.15422 / KT0803) (Gramella forsetii), this protein is Glutamate--tRNA ligase.